Reading from the N-terminus, the 170-residue chain is Crossover junction endodeoxyribonuclease RuvC (170 aa).

Catalysis depends on residues aspartate 9, glutamate 70, and aspartate 145. 3 residues coordinate Mg(2+): aspartate 9, glutamate 70, and aspartate 145.

Belongs to the RuvC family. In terms of assembly, homodimer which binds Holliday junction (HJ) DNA. The HJ becomes 2-fold symmetrical on binding to RuvC with unstacked arms; it has a different conformation from HJ DNA in complex with RuvA. In the full resolvosome a probable DNA-RuvA(4)-RuvB(12)-RuvC(2) complex forms which resolves the HJ. Mg(2+) is required as a cofactor.

It is found in the cytoplasm. It carries out the reaction Endonucleolytic cleavage at a junction such as a reciprocal single-stranded crossover between two homologous DNA duplexes (Holliday junction).. In terms of biological role, the RuvA-RuvB-RuvC complex processes Holliday junction (HJ) DNA during genetic recombination and DNA repair. Endonuclease that resolves HJ intermediates. Cleaves cruciform DNA by making single-stranded nicks across the HJ at symmetrical positions within the homologous arms, yielding a 5'-phosphate and a 3'-hydroxyl group; requires a central core of homology in the junction. The consensus cleavage sequence is 5'-(A/T)TT(C/G)-3'. Cleavage occurs on the 3'-side of the TT dinucleotide at the point of strand exchange. HJ branch migration catalyzed by RuvA-RuvB allows RuvC to scan DNA until it finds its consensus sequence, where it cleaves and resolves the cruciform DNA. The chain is Crossover junction endodeoxyribonuclease RuvC from Chlamydia trachomatis serovar A (strain ATCC VR-571B / DSM 19440 / HAR-13).